A 728-amino-acid polypeptide reads, in one-letter code: Elongation factor 2 (728 aa).

The 243-residue stretch at 19 to 261 (EQIRNIAIAA…MVAEHFPNPI (243 aa)) folds into the tr-type G domain. Residues 28–35 (AHVDHGKT), 94–98 (DTPGH), and 148–151 (NKVD) contribute to the GTP site. Histidine 596 is modified (diphthamide).

The protein belongs to the TRAFAC class translation factor GTPase superfamily. Classic translation factor GTPase family. EF-G/EF-2 subfamily.

The protein localises to the cytoplasm. Its function is as follows. Catalyzes the GTP-dependent ribosomal translocation step during translation elongation. During this step, the ribosome changes from the pre-translocational (PRE) to the post-translocational (POST) state as the newly formed A-site-bound peptidyl-tRNA and P-site-bound deacylated tRNA move to the P and E sites, respectively. Catalyzes the coordinated movement of the two tRNA molecules, the mRNA and conformational changes in the ribosome. In Halobacterium salinarum (strain ATCC 29341 / DSM 671 / R1), this protein is Elongation factor 2.